Here is a 426-residue protein sequence, read N- to C-terminus: Histidine--tRNA ligase (426 aa).

The protein belongs to the class-II aminoacyl-tRNA synthetase family. Homodimer.

It localises to the cytoplasm. It catalyses the reaction tRNA(His) + L-histidine + ATP = L-histidyl-tRNA(His) + AMP + diphosphate + H(+). The chain is Histidine--tRNA ligase from Shewanella baltica (strain OS195).